Consider the following 37-residue polypeptide: Toxin Bcg III 28.78 (37 aa).

C6 and C31 are disulfide-bonded.

It is found in the secreted. The protein resides in the nematocyst. This is Toxin Bcg III 28.78 from Bunodosoma cangicum (Sea anemone).